Here is a 254-residue protein sequence, read N- to C-terminus: Methyltransferase-like protein 23 (254 aa).

The segment at 1–27 (MKSFIFRQNPRKQQQEQNNLVDYSDSD) is disordered. Residues 11 to 21 (RKQQQEQNNLV) show a composition bias toward polar residues.

It belongs to the methyltransferase superfamily. METTL23 family.

Probable methyltransferase. This chain is Methyltransferase-like protein 23, found in Dictyostelium discoideum (Social amoeba).